We begin with the raw amino-acid sequence, 298 residues long: MPTRMITKDEVTLWSEGIGDPADAPLLLIAGGNLSARSWPDEFVERLAAAGHFVIRYDHRDTGRSSRYDFALHPYGFDELATDALAVLDAWQVRAAHVVGMSLGNTIGQLLALDAPERLLTLTVMLGGALDVDFDADLEAALKGEPSVSGLPVPSRRFLDMMMLLQQPAGTDEELLERRVEKWRLLNGEGVPFDSDEFRRRELLAAGHAGTFDEPIVHHMIPQPPVSRGAELARITTPVLAIQAMCDPAAPPPHARHLADRIPGARVVEIENMGHALPLAVHEPLAAAICAHTRAATV.

Residues 25 to 277 (PLLLIAGGNL…VEIENMGHAL (253 aa)) enclose the AB hydrolase-1 domain.

It belongs to the methyl esterase DnrP family.

The enzyme catalyses rhodomycin D + H2O = 10-carboxy-13-deoxycarminomycin + methanol + H(+). The catalysed reaction is 4-O-methylrhodomycin D + H2O = 10-carboxy-13-deoxydaunorubicin + methanol + H(+). Its pathway is antibiotic biosynthesis; daunorubicin biosynthesis. It functions in the pathway antibiotic biosynthesis; carminomycin biosynthesis. Its function is as follows. Involved in the biosynthesis of the anthracyclines carminomycin and daunorubicin (daunomycin) which are aromatic polyketide antibiotics that exhibit high cytotoxicity and are widely applied in the chemotherapy of a variety of cancers. Catalyzes the removal of methyl group from the carbomethoxy group of rhodomycin D (10-carbomethoxy-13-deoxycarminomycin) and 4-O-methylrhodomycin D to yield 10-carboxy-13-deoxycarminomycin and 10-carboxy-13-deoxydaunorubicin, respectively. Could be also involved in the decarboxylation of 10-carboxy-13-deoxycarminomycin and 10-carboxy-13-deoxydaunorubicin to yield 13-deoxycarminomycin and 13-deoxydaunorubicin, respectively. It seems that DauK may influence the ability of DauP to carry out the decarboxylation. The chain is Rhodomycin D methylesterase DauP (dauP) from Streptomyces sp. (strain C5).